A 428-amino-acid chain; its full sequence is CinA-like protein (428 aa).

The protein belongs to the CinA family.

The chain is CinA-like protein from Gemmatimonas aurantiaca (strain DSM 14586 / JCM 11422 / NBRC 100505 / T-27).